The primary structure comprises 438 residues: ATP phosphoribosyltransferase regulatory subunit (438 aa).

It belongs to the class-II aminoacyl-tRNA synthetase family. HisZ subfamily. In terms of assembly, heteromultimer composed of HisG and HisZ subunits.

The protein localises to the cytoplasm. It functions in the pathway amino-acid biosynthesis; L-histidine biosynthesis; L-histidine from 5-phospho-alpha-D-ribose 1-diphosphate: step 1/9. Required for the first step of histidine biosynthesis. May allow the feedback regulation of ATP phosphoribosyltransferase activity by histidine. The protein is ATP phosphoribosyltransferase regulatory subunit of Geobacter sulfurreducens (strain ATCC 51573 / DSM 12127 / PCA).